The primary structure comprises 812 residues: DNA translocase FtsK 1 (812 aa).

Positions 1 to 11 (MTEKSHKKTAK) are enriched in basic residues. Residues 1–36 (MTEKSHKKTAKGRAGSPSPTSARNKKADNGARGNKV) are disordered. Basic and acidic residues predominate over residues 25–36 (KKADNGARGNKV). The next 5 membrane-spanning stretches (helical) occupy residues 63-83 (IGDA…ISLI), 116-136 (VGYY…CVVL), 156-176 (IAAA…YFVL), 184-204 (LPVG…AWLL), and 210-230 (LLII…ISWL). Over 231–812 (EFLNGAGRAV…RKILAHKDHL (582 aa)) the chain is Cytoplasmic. The 210-residue stretch at 461 to 670 (GTPVVGDLAK…FTVQSKIDSR (210 aa)) folds into the FtsK domain. 481 to 486 (GSGKSV) serves as a coordination point for ATP.

Belongs to the FtsK/SpoIIIE/SftA family. In terms of assembly, homohexamer. Forms a ring that surrounds DNA.

Its subcellular location is the cell inner membrane. Functionally, essential cell division protein that coordinates cell division and chromosome segregation. The N-terminus is involved in assembly of the cell-division machinery. The C-terminus functions as a DNA motor that moves dsDNA in an ATP-dependent manner towards the dif recombination site, which is located within the replication terminus region. Translocation stops specifically at Xer-dif sites, where FtsK interacts with the Xer recombinase, allowing activation of chromosome unlinking by recombination. FtsK orienting polar sequences (KOPS) guide the direction of DNA translocation. FtsK can remove proteins from DNA as it translocates, but translocation stops specifically at XerCD-dif site, thereby preventing removal of XerC and XerD from dif. In Neisseria meningitidis serogroup B (strain ATCC BAA-335 / MC58), this protein is DNA translocase FtsK 1 (ftsK1).